Reading from the N-terminus, the 140-residue chain is Large ribosomal subunit protein uL16 (140 aa).

The protein belongs to the universal ribosomal protein uL16 family. As to quaternary structure, part of the 50S ribosomal subunit.

In terms of biological role, binds 23S rRNA and is also seen to make contacts with the A and possibly P site tRNAs. This Geotalea uraniireducens (strain Rf4) (Geobacter uraniireducens) protein is Large ribosomal subunit protein uL16.